A 360-amino-acid polypeptide reads, in one-letter code: Phospho-N-acetylmuramoyl-pentapeptide-transferase (360 aa).

The next 10 helical transmembrane spans lie at 26–46 (AILG…ILIK), 73–93 (TMGG…WGDL), 97–117 (YVLV…IDDY), 135–155 (ALQS…STMV), 168–188 (IMPQ…VGAS), 199–219 (GLAI…AYLS), 236–256 (AGEL…FLWF), 263–283 (VFMG…IAIL), 288–308 (ILLV…ILQV), and 338–358 (VIVR…ATLK).

Belongs to the glycosyltransferase 4 family. MraY subfamily. The cofactor is Mg(2+).

The protein resides in the cell inner membrane. It catalyses the reaction UDP-N-acetyl-alpha-D-muramoyl-L-alanyl-gamma-D-glutamyl-meso-2,6-diaminopimeloyl-D-alanyl-D-alanine + di-trans,octa-cis-undecaprenyl phosphate = di-trans,octa-cis-undecaprenyl diphospho-N-acetyl-alpha-D-muramoyl-L-alanyl-D-glutamyl-meso-2,6-diaminopimeloyl-D-alanyl-D-alanine + UMP. It functions in the pathway cell wall biogenesis; peptidoglycan biosynthesis. Catalyzes the initial step of the lipid cycle reactions in the biosynthesis of the cell wall peptidoglycan: transfers peptidoglycan precursor phospho-MurNAc-pentapeptide from UDP-MurNAc-pentapeptide onto the lipid carrier undecaprenyl phosphate, yielding undecaprenyl-pyrophosphoryl-MurNAc-pentapeptide, known as lipid I. In Shewanella frigidimarina (strain NCIMB 400), this protein is Phospho-N-acetylmuramoyl-pentapeptide-transferase.